We begin with the raw amino-acid sequence, 124 residues long: Glutaredoxin-2 (124 aa).

Cys-13 and Cys-16 are oxidised to a cystine.

The protein belongs to the glutaredoxin family. As to quaternary structure, homodimer.

Its subcellular location is the host cytoplasm. Functionally, glutaredoxin necessary for virion morphogenesis and virus replication. Functions as a thiol-disulfide transfer protein between membrane-associated OPG128 and substrates OPG095 or OPG053. The complete pathway for formation of disulfide bonds in intracellular virion membrane proteins sequentially involves oxidation of OPG072, OPG128 and OPG088. Exhibit thioltransferase and dehydroascorbate reductase activities in vitro. In Oryctolagus cuniculus (Rabbit), this protein is Glutaredoxin-2 (OPG088).